Here is a 470-residue protein sequence, read N- to C-terminus: Beta-Ala-Xaa dipeptidase (470 aa).

His87 contributes to the Zn(2+) binding site. Residue Asp89 is part of the active site. Asp119 is a Zn(2+) binding site. The active-site Proton acceptor is Glu153. 2 residues coordinate Zn(2+): Glu154 and Asp177. Arg350 is a binding site for substrate. Residue His439 coordinates Zn(2+).

Belongs to the peptidase M20A family. The cofactor is Zn(2+).

It localises to the cytoplasm. Its activity is regulated as follows. Fully inhibited by 1,10-phenanthroline or EDTA. Functionally, is a relatively unspecific dipeptidase cleaving a variety of dipeptides, notably those with an N-terminal beta-Ala or D-Ala residue, e.g. carnosine (beta-Ala-His). To a lesser extent, also shows aminopeptidase activity, since it is able to catalyze the removal of the N-terminal amino acid from a few distinct tripeptides. The sequence is that of Beta-Ala-Xaa dipeptidase (pepV) from Lactobacillus delbrueckii subsp. lactis.